We begin with the raw amino-acid sequence, 1136 residues long: Type I inositol polyphosphate 5-phosphatase 13 (1136 aa).

WD repeat units lie at residues 147 to 185 (ETQT…EAGC), 205 to 244 (VTTS…VSHD), 259 to 297 (AHRG…KSLL), 436 to 475 (EDTR…RDVN), and 515 to 552 (SHNE…PLDN). 2 catalytic regions span residues 782 to 798 (DMVA…FGIT) and 861 to 876 (KKRI…YRDT). A Glycyl lysine isopeptide (Lys-Gly) (interchain with G-Cter in ubiquitin) cross-link involves residue lysine 940. Residues 1104–1136 (KNLGGSRRYPTDITRNGSTRPRTEDSVRRGKSR) are disordered. The span at 1124–1136 (PRTEDSVRRGKSR) shows a compositional bias: basic and acidic residues.

It belongs to the inositol polyphosphate 5-phosphatase family. Interacts with KIN10, but not with PHOT1. It depends on Mg(2+) as a cofactor. In terms of tissue distribution, expressed in young seedlings and flowers. Highly expressed in anther and pollen grains, but not in pistils. Not detected in maturated roots, stems and rosette leaves.

It localises to the nucleus. The catalysed reaction is 1D-myo-inositol 1,4,5-trisphosphate + H2O = 1D-myo-inositol 1,4-bisphosphate + phosphate. Functionally, converts inositol 1,4,5-trisphosphate (Ins(1,4,5)P3) to inositol 1,4-bisphosphate. Modulates cotyledon vein development through regulating auxin homeostasis. Involved in blue light responses. Decreases the amount of KIN10 degraded by the proteasome under low nutrient conditions. Participates with IP5P12 in the control of Ins(1,4,5)P3/Ca(2+) levels that is crucial for maintaining pollen dormancy and regulating early germination of pollen. May modulate auxin transport by regulating vesicle trafficking and thereby plays a role in root gravitropism. This chain is Type I inositol polyphosphate 5-phosphatase 13, found in Arabidopsis thaliana (Mouse-ear cress).